We begin with the raw amino-acid sequence, 154 residues long: uncharacterized protein (154 aa).

Helical transmembrane passes span 54-74 (FLIT…IYLL) and 81-101 (FAFV…FFLS).

Its subcellular location is the cell membrane. This is an uncharacterized protein from Mycoplasma genitalium (strain ATCC 33530 / DSM 19775 / NCTC 10195 / G37) (Mycoplasmoides genitalium).